The sequence spans 1550 residues: Protein TIME FOR COFFEE (1550 aa).

Disordered regions lie at residues 1–191 (MDRN…PVSP), 207–304 (VPRK…PVAV), 325–505 (TSKQ…SERG), 708–736 (QGSV…TAQR), 779–805 (RPPN…SATP), 859–1023 (FNGS…KAGV), 1086–1130 (ASLE…QSIA), 1163–1196 (ALPQ…SQQP), 1213–1296 (AASA…SVAA), and 1321–1435 (NSKP…PKHG). A compositionally biased stretch (basic and acidic residues) spans 43–80 (EAARLRDRGGSNKKDRDRERDRDRERERERDRERDRLN). Acidic residues predominate over residues 100–118 (DGGDDSSEESVNDDEEYDD). Positions 134–151 (SNNISAASFSSSLSNHHN) are enriched in low complexity. Residues 157–171 (LHHHHHSHNNNHQRK) show a composition bias toward basic residues. Residues 241–250 (RQISSTSPAN) are compositionally biased toward polar residues. Residues 292-301 (KSSSSKLSSP) are compositionally biased toward low complexity. Residues 348–366 (RVSSPISNPQTLPQSSITL) are compositionally biased toward polar residues. Positions 367-379 (AANSSSSNVSAIA) are enriched in low complexity. The segment covering 409-432 (SKSQVPFSNQLKSSGSGEGNSSVL) has biased composition (polar residues). Composition is skewed to basic and acidic residues over residues 447–461 (DSEK…DETI) and 473–490 (SDGE…KFEI). 3 stretches are compositionally biased toward polar residues: residues 713–736 (GRSS…TAQR), 783–803 (SGIT…SASA), and 884–992 (LTGQ…NLGL). The segment covering 1112 to 1126 (SGGGAIGKTSGGNGG) has biased composition (gly residues). The segment covering 1164–1173 (LPQSSGSLPT) has biased composition (polar residues). Low complexity predominate over residues 1174 to 1195 (SHHQQLLQQQQQQHMQRSQSQQ). Positions 1234–1253 (NMTTSPAGTTKFANANSGFP) are enriched in polar residues. A compositionally biased stretch (low complexity) spans 1254-1273 (QNLVQSSSNQVQSQQWKNNS). Composition is skewed to polar residues over residues 1274–1296 (PRTT…SVAA), 1321–1342 (NSKP…NHQA), and 1351–1360 (SPSTSSVSKN). The segment covering 1361–1382 (ASGSPRTTASASSAANKGGQAS) has biased composition (low complexity). Composition is skewed to polar residues over residues 1383 to 1397 (TTTH…NLQP) and 1405 to 1419 (GGRN…NPTT). Over residues 1420-1435 (SSGSKSQQQQQLPKHG) the composition is skewed to low complexity.

Interacts with MYC2.

The protein localises to the nucleus. Functionally, regulator of normal clock function. Acts in the mid to late night. Contributes to the amplitude of circadian clocks. May act on the transcriptional induction of LATE ELONGATED HYPOCOTYL (LHY). Inhibits MYC2 protein accumulation, acting as a negative factor in the JA-signaling pathway. The protein is Protein TIME FOR COFFEE (TIC) of Arabidopsis thaliana (Mouse-ear cress).